A 146-amino-acid polypeptide reads, in one-letter code: MAKEFSRTRRIGQQLQQELAVVLQRDMKDPRIGFVTVNDVDVSRDLSYAKVFVTFFEEDKEVVQEKLNALIAAAPYIRTLVAGRMKLRVMPEIRFVYDSSLVEGMRMSNLVSQVINSDKAKQQQFGSADDVTENDIDEADDTEGKA.

The segment at 121 to 146 is disordered; sequence KQQQFGSADDVTENDIDEADDTEGKA. The span at 130–146 shows a compositional bias: acidic residues; sequence DVTENDIDEADDTEGKA.

The protein belongs to the RbfA family. Monomer. Binds 30S ribosomal subunits, but not 50S ribosomal subunits or 70S ribosomes.

It is found in the cytoplasm. One of several proteins that assist in the late maturation steps of the functional core of the 30S ribosomal subunit. Associates with free 30S ribosomal subunits (but not with 30S subunits that are part of 70S ribosomes or polysomes). Required for efficient processing of 16S rRNA. May interact with the 5'-terminal helix region of 16S rRNA. This is Ribosome-binding factor A from Shewanella sp. (strain MR-4).